Here is a 397-residue protein sequence, read N- to C-terminus: Arginine biosynthesis bifunctional protein ArgJ (397 aa).

Substrate is bound by residues Thr-147, Lys-173, Thr-184, Glu-270, Asn-392, and Thr-397. The active-site Nucleophile is the Thr-184.

This sequence belongs to the ArgJ family. In terms of assembly, heterotetramer of two alpha and two beta chains.

The protein localises to the cytoplasm. It catalyses the reaction N(2)-acetyl-L-ornithine + L-glutamate = N-acetyl-L-glutamate + L-ornithine. The catalysed reaction is L-glutamate + acetyl-CoA = N-acetyl-L-glutamate + CoA + H(+). Its pathway is amino-acid biosynthesis; L-arginine biosynthesis; L-ornithine and N-acetyl-L-glutamate from L-glutamate and N(2)-acetyl-L-ornithine (cyclic): step 1/1. It participates in amino-acid biosynthesis; L-arginine biosynthesis; N(2)-acetyl-L-ornithine from L-glutamate: step 1/4. Its function is as follows. Catalyzes two activities which are involved in the cyclic version of arginine biosynthesis: the synthesis of N-acetylglutamate from glutamate and acetyl-CoA as the acetyl donor, and of ornithine by transacetylation between N(2)-acetylornithine and glutamate. This Staphylococcus epidermidis (strain ATCC 35984 / DSM 28319 / BCRC 17069 / CCUG 31568 / BM 3577 / RP62A) protein is Arginine biosynthesis bifunctional protein ArgJ.